The chain runs to 151 residues: Histone H2A.2.2 (151 aa).

Met1 bears the N-acetylmethionine mark. Positions 129-151 are disordered; sequence EKAEKAGTKAKSPKKATKSPKKA. Basic residues predominate over residues 139-151; that stretch reads KSPKKATKSPKKA. 2 consecutive short sequence motifs (SPKK motif) follow at residues 140-143 and 147-150; these read SPKK.

It belongs to the histone H2A family. As to quaternary structure, the nucleosome is a histone octamer containing two molecules each of H2A, H2B, H3 and H4 assembled in one H3-H4 heterotetramer and two H2A-H2B heterodimers. The octamer wraps approximately 147 bp of DNA. In terms of processing, phosphorylated within its C-terminal part, probably at the SPKK motifs.

It is found in the nucleus. The protein localises to the chromosome. Its function is as follows. Core component of nucleosome. Nucleosomes wrap and compact DNA into chromatin, limiting DNA accessibility to the cellular machineries which require DNA as a template. Histones thereby play a central role in transcription regulation, DNA repair, DNA replication and chromosomal stability. DNA accessibility is regulated via a complex set of post-translational modifications of histones, also called histone code, and nucleosome remodeling. The polypeptide is Histone H2A.2.2 (Triticum aestivum (Wheat)).